Consider the following 510-residue polypeptide: Bifunctional purine biosynthesis protein PurH (510 aa).

One can recognise an MGS-like domain in the interval 1-142; the sequence is MRALLSVSDK…KNYKDVMVLC (142 aa).

It belongs to the PurH family.

The enzyme catalyses (6R)-10-formyltetrahydrofolate + 5-amino-1-(5-phospho-beta-D-ribosyl)imidazole-4-carboxamide = 5-formamido-1-(5-phospho-D-ribosyl)imidazole-4-carboxamide + (6S)-5,6,7,8-tetrahydrofolate. The catalysed reaction is IMP + H2O = 5-formamido-1-(5-phospho-D-ribosyl)imidazole-4-carboxamide. It participates in purine metabolism; IMP biosynthesis via de novo pathway; 5-formamido-1-(5-phospho-D-ribosyl)imidazole-4-carboxamide from 5-amino-1-(5-phospho-D-ribosyl)imidazole-4-carboxamide (10-formyl THF route): step 1/1. The protein operates within purine metabolism; IMP biosynthesis via de novo pathway; IMP from 5-formamido-1-(5-phospho-D-ribosyl)imidazole-4-carboxamide: step 1/1. The polypeptide is Bifunctional purine biosynthesis protein PurH (Campylobacter jejuni subsp. jejuni serotype O:2 (strain ATCC 700819 / NCTC 11168)).